The sequence spans 89 residues: Small ribosomal subunit protein uS14A (89 aa).

This sequence belongs to the universal ribosomal protein uS14 family. In terms of assembly, part of the 30S ribosomal subunit. Contacts proteins S3 and S10.

Binds 16S rRNA, required for the assembly of 30S particles and may also be responsible for determining the conformation of the 16S rRNA at the A site. The sequence is that of Small ribosomal subunit protein uS14A from Lactiplantibacillus plantarum (strain ATCC BAA-793 / NCIMB 8826 / WCFS1) (Lactobacillus plantarum).